The sequence spans 138 residues: Cysteine desulfuration protein SufE (138 aa).

Residue cysteine 51 is the Cysteine persulfide intermediate of the active site.

The protein belongs to the SufE family. In terms of assembly, homodimer. Interacts with SufS.

It is found in the cytoplasm. Its pathway is cofactor biosynthesis; iron-sulfur cluster biosynthesis. Functionally, participates in cysteine desulfuration mediated by SufS. Cysteine desulfuration mobilizes sulfur from L-cysteine to yield L-alanine and constitutes an essential step in sulfur metabolism for biosynthesis of a variety of sulfur-containing biomolecules. Functions as a sulfur acceptor for SufS, by mediating the direct transfer of the sulfur atom from the S-sulfanylcysteine of SufS, an intermediate product of cysteine desulfuration process. The polypeptide is Cysteine desulfuration protein SufE (Pectobacterium carotovorum subsp. carotovorum (strain PC1)).